A 444-amino-acid chain; its full sequence is Structure-specific endonuclease subunit SLX1 (444 aa).

One can recognise a GIY-YIG domain in the interval 23–105 (AFYCCYLLRS…QNTKVSRHAD (83 aa)). The SLX1-type zinc-finger motif lies at 240-295 (CGVCKQRLILQHDIIAVCSHSSCHCAAHLSCLSSHFLKDKDSDSELIPREGTCPAC). Disordered regions lie at residues 323 to 355 (RRRR…DALQ) and 386 to 444 (AHRP…EVIE).

It belongs to the SLX1 family. In terms of assembly, forms a heterodimer with SLX4. A divalent metal cation is required as a cofactor.

The protein resides in the nucleus. Its function is as follows. Catalytic subunit of the SLX1-SLX4 structure-specific endonuclease that resolves DNA secondary structures generated during DNA repair and recombination. Has endonuclease activity towards branched DNA substrates, introducing single-strand cuts in duplex DNA close to junctions with ss-DNA. The polypeptide is Structure-specific endonuclease subunit SLX1 (Paracoccidioides brasiliensis (strain Pb18)).